The primary structure comprises 506 residues: 2,3-bisphosphoglycerate-independent phosphoglycerate mutase (506 aa).

2 residues coordinate Mn(2+): Asp-13 and Ser-63. Residue Ser-63 is the Phosphoserine intermediate of the active site. Substrate is bound by residues His-124, 153–154, Arg-183, Arg-189, 255–258, and Lys-331; these read RD and RADR. Positions 397, 401, 438, 439, and 457 each coordinate Mn(2+).

This sequence belongs to the BPG-independent phosphoglycerate mutase family. In terms of assembly, monomer. It depends on Mn(2+) as a cofactor.

The enzyme catalyses (2R)-2-phosphoglycerate = (2R)-3-phosphoglycerate. The protein operates within carbohydrate degradation; glycolysis; pyruvate from D-glyceraldehyde 3-phosphate: step 3/5. Its function is as follows. Catalyzes the interconversion of 2-phosphoglycerate and 3-phosphoglycerate. This chain is 2,3-bisphosphoglycerate-independent phosphoglycerate mutase, found in Ruegeria sp. (strain TM1040) (Silicibacter sp.).